The chain runs to 119 residues: Hemerythrin subunit A (119 aa).

Histidine 26, histidine 55, glutamate 59, histidine 74, histidine 78, histidine 107, and aspartate 112 together coordinate Fe cation.

This sequence belongs to the hemerythrin family.

Its function is as follows. Hemerythrin is a respiratory protein in blood cells of certain marine worms. The oxygen-binding site in each chain contains two iron atoms. The protein is Hemerythrin subunit A of Sipunculus nudus (Sipunculan worm).